A 301-amino-acid polypeptide reads, in one-letter code: Acetylglutamate kinase (301 aa).

Substrate is bound by residues 68-69 (GG), arginine 90, and asparagine 195.

This sequence belongs to the acetylglutamate kinase family. ArgB subfamily.

It is found in the cytoplasm. It catalyses the reaction N-acetyl-L-glutamate + ATP = N-acetyl-L-glutamyl 5-phosphate + ADP. It functions in the pathway amino-acid biosynthesis; L-arginine biosynthesis; N(2)-acetyl-L-ornithine from L-glutamate: step 2/4. Its function is as follows. Catalyzes the ATP-dependent phosphorylation of N-acetyl-L-glutamate. The polypeptide is Acetylglutamate kinase (Pseudomonas fluorescens (strain SBW25)).